Here is a 220-residue protein sequence, read N- to C-terminus: MKTGALTTFLALCLPVTVFATTLRLSNEVDLLVLDGKKVSSSLLRGAESIELENGPHQLVFRVEKTIRLPGNEERLYISPPLVISFDTQLINQVNFQLPRLENEREASHFNAAPRLALLDGDAMPIPVKLDILAITSTAKVVDYEIETERYNKSAKRASLPQFATMMADDSTLLSDVSELDTVPPQSQTLTEQRLKYWFRLADPQTRHHFLQWAEKQPPS.

Residues 1–20 form the signal peptide; sequence MKTGALTTFLALCLPVTVFA.

The protein belongs to the UPF0319 family.

This chain is UPF0319 protein YccT, found in Salmonella schwarzengrund (strain CVM19633).